The primary structure comprises 91 residues: Long neurotoxin OH-57 (91 aa).

Positions 1 to 21 (MKTLLLTLVVVTIVCLDLGYT) are cleaved as a signal peptide. 5 disulfides stabilise this stretch: C24-C41, C34-C62, C47-C51, C66-C77, and C78-C83.

This sequence belongs to the three-finger toxin family. Long-chain subfamily. Type II alpha-neurotoxin sub-subfamily. Expressed by the venom gland.

Its subcellular location is the secreted. Binds with high affinity to muscular (alpha-1/CHRNA1) and neuronal (alpha-7/CHRNA7) nicotinic acetylcholine receptor (nAChR) and inhibits acetylcholine from binding to the receptor, thereby impairing neuromuscular and neuronal transmission. The protein is Long neurotoxin OH-57 of Ophiophagus hannah (King cobra).